The chain runs to 215 residues: Pyrrolidone-carboxylate peptidase (215 aa).

Residues glutamate 78, cysteine 141, and histidine 165 contribute to the active site.

It belongs to the peptidase C15 family. In terms of assembly, homotetramer.

The protein resides in the cytoplasm. It carries out the reaction Release of an N-terminal pyroglutamyl group from a polypeptide, the second amino acid generally not being Pro.. Its function is as follows. Removes 5-oxoproline from various penultimate amino acid residues except L-proline. The sequence is that of Pyrrolidone-carboxylate peptidase from Lacticaseibacillus paracasei (strain ATCC 334 / BCRC 17002 / CCUG 31169 / CIP 107868 / KCTC 3260 / NRRL B-441) (Lactobacillus paracasei).